A 272-amino-acid polypeptide reads, in one-letter code: DNA repair protein RecO (272 aa).

The protein belongs to the RecO family.

Functionally, involved in DNA repair and RecF pathway recombination. The sequence is that of DNA repair protein RecO from Limosilactobacillus fermentum (strain NBRC 3956 / LMG 18251) (Lactobacillus fermentum).